Consider the following 80-residue polypeptide: Cell division topological specificity factor (80 aa).

It belongs to the MinE family.

In terms of biological role, prevents the cell division inhibition by proteins MinC and MinD at internal division sites while permitting inhibition at polar sites. This ensures cell division at the proper site by restricting the formation of a division septum at the midpoint of the long axis of the cell. The protein is Cell division topological specificity factor of Wolinella succinogenes (strain ATCC 29543 / DSM 1740 / CCUG 13145 / JCM 31913 / LMG 7466 / NCTC 11488 / FDC 602W) (Vibrio succinogenes).